The following is a 388-amino-acid chain: S-adenosylmethionine synthase (388 aa).

Position 17 (His-17) interacts with ATP. Residue Asp-19 participates in Mg(2+) binding. Glu-45 contributes to the K(+) binding site. Glu-58 and Gln-102 together coordinate L-methionine. Residues 102–112 form a flexible loop region; that stretch reads QSVHIAQGVDA. ATP contacts are provided by residues 167–169, Asp-241, 247–248, Ala-264, and Lys-268; these read DAK and RK. Residue Asp-241 participates in L-methionine binding. Lys-272 is a binding site for L-methionine.

It belongs to the AdoMet synthase family. Homotetramer; dimer of dimers. The cofactor is Mg(2+). Requires K(+) as cofactor.

The protein localises to the cytoplasm. The catalysed reaction is L-methionine + ATP + H2O = S-adenosyl-L-methionine + phosphate + diphosphate. It participates in amino-acid biosynthesis; S-adenosyl-L-methionine biosynthesis; S-adenosyl-L-methionine from L-methionine: step 1/1. Functionally, catalyzes the formation of S-adenosylmethionine (AdoMet) from methionine and ATP. The overall synthetic reaction is composed of two sequential steps, AdoMet formation and the subsequent tripolyphosphate hydrolysis which occurs prior to release of AdoMet from the enzyme. The polypeptide is S-adenosylmethionine synthase (Maricaulis maris (strain MCS10) (Caulobacter maris)).